Reading from the N-terminus, the 540-residue chain is Glucose-6-phosphate isomerase (540 aa).

Glu350 acts as the Proton donor in catalysis. Catalysis depends on residues His381 and Lys503.

It belongs to the GPI family.

The protein resides in the cytoplasm. It catalyses the reaction alpha-D-glucose 6-phosphate = beta-D-fructose 6-phosphate. The protein operates within carbohydrate biosynthesis; gluconeogenesis. It participates in carbohydrate degradation; glycolysis; D-glyceraldehyde 3-phosphate and glycerone phosphate from D-glucose: step 2/4. In terms of biological role, catalyzes the reversible isomerization of glucose-6-phosphate to fructose-6-phosphate. This Paraburkholderia xenovorans (strain LB400) protein is Glucose-6-phosphate isomerase.